Consider the following 368-residue polypeptide: Chaperone protein DnaJ (368 aa).

The region spanning 5–69 is the J domain; the sequence is DYYEVLGLSQ…QKRAQYDQFG (65 aa). The CR-type zinc finger occupies 130–212; that stretch reads GKELNVEIPV…CHGSGKVRKR (83 aa). Residues Cys143, Cys146, Cys160, Cys163, Cys186, Cys189, Cys200, and Cys203 each coordinate Zn(2+). CXXCXGXG motif repeat units lie at residues 143 to 150, 160 to 167, 186 to 193, and 200 to 207; these read CDTCKGSG, CKHCSGSG, CGHCSGTG, and CTTCHGSG.

This sequence belongs to the DnaJ family. As to quaternary structure, homodimer. It depends on Zn(2+) as a cofactor.

It is found in the cytoplasm. Participates actively in the response to hyperosmotic and heat shock by preventing the aggregation of stress-denatured proteins and by disaggregating proteins, also in an autonomous, DnaK-independent fashion. Unfolded proteins bind initially to DnaJ; upon interaction with the DnaJ-bound protein, DnaK hydrolyzes its bound ATP, resulting in the formation of a stable complex. GrpE releases ADP from DnaK; ATP binding to DnaK triggers the release of the substrate protein, thus completing the reaction cycle. Several rounds of ATP-dependent interactions between DnaJ, DnaK and GrpE are required for fully efficient folding. Also involved, together with DnaK and GrpE, in the DNA replication of plasmids through activation of initiation proteins. This is Chaperone protein DnaJ from Bacillus mycoides (strain KBAB4) (Bacillus weihenstephanensis).